The primary structure comprises 204 residues: Thymidine kinase (204 aa).

Residues 23-30 (GSMFSGKT) and 95-98 (DEAQ) contribute to the ATP site. Residue E96 is the Proton acceptor of the active site. Residues C152, C155, C184, and C187 each coordinate Zn(2+).

The protein belongs to the thymidine kinase family. Homotetramer.

The protein localises to the cytoplasm. It catalyses the reaction thymidine + ATP = dTMP + ADP + H(+). This Porphyromonas gingivalis (strain ATCC BAA-308 / W83) protein is Thymidine kinase.